The sequence spans 122 residues: Secretion system apparatus protein SsaM (122 aa).

The chain is Secretion system apparatus protein SsaM (ssaM) from Salmonella typhimurium (strain LT2 / SGSC1412 / ATCC 700720).